A 194-amino-acid polypeptide reads, in one-letter code: FK506-binding protein 3 (194 aa).

Residues 1–19 (MNKFLIALLVLATLAVSFS) form the signal peptide. The PPIase FKBP-type domain occupies 44 to 133 (GDYISLKYVG…YFDLEVVSIE (90 aa)). A helical membrane pass occupies residues 148 to 168 (VGTIIAFSMLAGFIVLVKFII). The interval 173–194 (DESNSKKPAPGKPKKTKAAKQN) is disordered. A compositionally biased stretch (basic residues) spans 184-194 (KPKKTKAAKQN).

The protein belongs to the FKBP-type PPIase family.

It is found in the membrane. It carries out the reaction [protein]-peptidylproline (omega=180) = [protein]-peptidylproline (omega=0). Its activity is regulated as follows. Inhibited by both FK506 and rapamycin. In terms of biological role, PPIases accelerate the folding of proteins by catalyzing the cis-trans isomerization of proline imidic peptide bonds in oligopeptides. In Dictyostelium discoideum (Social amoeba), this protein is FK506-binding protein 3 (fkbp3).